The following is a 198-amino-acid chain: Na(+)-translocating NADH-quinone reductase subunit E (198 aa).

Helical transmembrane passes span 11-31 (SVFI…FLAV), 35-55 (VSTA…AVPA), 77-97 (FLNF…LEMI), 110-130 (GIFL…SFMV), 140-160 (VVYG…LAGL), and 176-196 (LGIT…FSGI).

The protein belongs to the NqrDE/RnfAE family. As to quaternary structure, composed of six subunits; NqrA, NqrB, NqrC, NqrD, NqrE and NqrF.

It localises to the cell inner membrane. It catalyses the reaction a ubiquinone + n Na(+)(in) + NADH + H(+) = a ubiquinol + n Na(+)(out) + NAD(+). NQR complex catalyzes the reduction of ubiquinone-1 to ubiquinol by two successive reactions, coupled with the transport of Na(+) ions from the cytoplasm to the periplasm. NqrA to NqrE are probably involved in the second step, the conversion of ubisemiquinone to ubiquinol. This chain is Na(+)-translocating NADH-quinone reductase subunit E, found in Actinobacillus pleuropneumoniae serotype 5b (strain L20).